A 135-amino-acid chain; its full sequence is ATP synthase epsilon chain (135 aa).

It belongs to the ATPase epsilon chain family. F-type ATPases have 2 components, CF(1) - the catalytic core - and CF(0) - the membrane proton channel. CF(1) has five subunits: alpha(3), beta(3), gamma(1), delta(1), epsilon(1). CF(0) has three main subunits: a, b and c.

Its subcellular location is the cell inner membrane. Produces ATP from ADP in the presence of a proton gradient across the membrane. The chain is ATP synthase epsilon chain from Bradyrhizobium sp. (strain ORS 278).